Reading from the N-terminus, the 692-residue chain is Serine/threonine-protein phosphatase PP-Z1 (692 aa).

Disordered stretches follow at residues 1-309 and 321-357; these read MGNS…DIEN and ENVNDKNNNITDSKKDPNEEFNDIMQSSGNKNAPKKF. Residue Gly-2 is the site of N-myristoyl glycine attachment. Low complexity-rich tracts occupy residues 32 to 41, 49 to 69, and 91 to 122; these read SHSVKSAKSN, SLPSSSTTNTNSNVPDPSTPS, and SSSHSHSNSQNELLTTPSSSSTKRPSTSRRSS. Residue Ser-49 is modified to Phosphoserine. Residues 170-179 show a composition bias toward acidic residues; that stretch reads LTDDDNDDKD. Residue Thr-171 is modified to Phosphothreonine. Over residues 190–204 the composition is skewed to low complexity; it reads RSSNSRPSSIRSGSV. The segment covering 207–216 has biased composition (basic and acidic residues); that stretch reads RKSDVTHEEP. A phosphoserine mark is found at Ser-209 and Ser-222. Composition is skewed to polar residues over residues 217 to 229 and 251 to 267; these read NNGSYSSNNQENY and FGSDGNTAYSTPLNSPG. Thr-261 is modified (phosphothreonine). At Ser-265 the chain carries Phosphoserine. Over residues 280-289 the composition is skewed to low complexity; sequence TSNSTSSLNH. Over residues 291 to 303 the composition is skewed to basic and acidic residues; sequence SSRDIYPSKHISN. Positions 321 to 331 are enriched in polar residues; that stretch reads ENVNDKNNNIT. Mn(2+) is bound by residues Asp-419, His-421, Asp-447, and Asn-479. Residue His-480 is the Proton donor of the active site. Mn(2+) contacts are provided by His-528 and His-603. Residues 672-692 are disordered; the sequence is LANQQQQMMETSITNDNESQQ. The span at 673–692 shows a compositional bias: polar residues; that stretch reads ANQQQQMMETSITNDNESQQ. A Phosphoserine modification is found at Ser-690.

The protein belongs to the PPP phosphatase family. PP-Z subfamily. Interacts with SIS2 and VHS3, which regulate its activity. Mn(2+) serves as cofactor.

The enzyme catalyses O-phospho-L-seryl-[protein] + H2O = L-seryl-[protein] + phosphate. It catalyses the reaction O-phospho-L-threonyl-[protein] + H2O = L-threonyl-[protein] + phosphate. With respect to regulation, inhibited by the regulatory subunits VHS3 and SIS2. Its function is as follows. Essential for the maintenance of cell size and integrity in response to osmotic stress. This is Serine/threonine-protein phosphatase PP-Z1 (PPZ1) from Saccharomyces cerevisiae (strain ATCC 204508 / S288c) (Baker's yeast).